We begin with the raw amino-acid sequence, 612 residues long: Oligopeptide transport ATP-binding protein OppD (612 aa).

In terms of domain architecture, ABC transporter 1 spans 5 to 255 (LEVTDLAVTF…RRMPYTVGLL (251 aa)). ATP is bound by residues serine 43, glycine 44, serine 45, glycine 46, lysine 47, serine 48, alanine 49, tyrosine 61, glutamine 96, arginine 147, glycine 158, glutamate 159, and histidine 213. The [4Fe-4S] cluster site is built by cysteine 286, cysteine 292, cysteine 299, and cysteine 317. Residues 350 to 600 (VRVRHLVKTY…PKHEYTRRLL (251 aa)) form the ABC transporter 2 domain. ATP contacts are provided by serine 396, glycine 397, serine 398, glycine 399, lysine 400, serine 401, threonine 402, glutamine 445, arginine 495, glutamate 499, glycine 503, and histidine 558.

It belongs to the ABC transporter superfamily. The complex is composed of an ATP-binding protein (OppD), two transmembrane proteins (OppB and OppC) and a solute-binding protein (OppA).

The protein localises to the cell inner membrane. It catalyses the reaction a [peptide](out) + ATP + H2O = a [peptide](in) + ADP + phosphate + H(+). In terms of biological role, part of the ABC transporter complex OppABCD involved in the uptake of oligopeptides. Responsible for energy coupling to the transport system. This chain is Oligopeptide transport ATP-binding protein OppD, found in Mycobacterium bovis (strain ATCC BAA-935 / AF2122/97).